Consider the following 665-residue polypeptide: Prelamin-A/C (665 aa).

The residue at position 1 (methionine 1) is an N-acetylmethionine. The interval 1-25 (METPSQRRATRSGAQASSTPLSPTR) is disordered. The tract at residues 1 to 33 (METPSQRRATRSGAQASSTPLSPTRITRLQEKE) is head. The segment at 1-130 (METPSQRRAT…TKKEGDLLAA (130 aa)) is interaction with MLIP. Residue threonine 3 is modified to Phosphothreonine. Residue serine 5 is modified to Phosphoserine. At threonine 10 the chain carries Phosphothreonine. Residues serine 12 and serine 18 each carry the phosphoserine modification. The residue at position 19 (threonine 19) is a Phosphothreonine. Position 22 is a phosphoserine (serine 22). The region spanning 31–387 (EKEDLQELND…KLLEGEEERL (357 aa)) is the IF rod domain. Lysine 32 carries the post-translational modification N6-acetyllysine; alternate. Lysine 32 carries the post-translational modification N6-succinyllysine; alternate. Lysine 32 participates in a covalent cross-link: Glycyl lysine isopeptide (Lys-Gly) (interchain with G-Cter in SUMO2); alternate. The interval 34–70 (DLQELNDRLAVYIDRVRSLETENAGLRLRITESEEVV) is coil 1A. A phosphoserine mark is found at serine 51, serine 66, and serine 71. A linker 1 region spans residues 71–80 (SREVSGIKAA). 2 positions are modified to N6-acetyllysine: lysine 78 and lysine 97. A coil 1B region spans residues 81–218 (YEAELGDARK…NIYSEELRET (138 aa)). A Glycyl lysine isopeptide (Lys-Gly) (interchain with G-Cter in SUMO2) cross-link involves residue lysine 97. Serine 107 bears the Phosphoserine mark. 6 positions are modified to N6-acetyllysine: lysine 108, lysine 114, lysine 123, lysine 135, lysine 144, and lysine 155. At lysine 171 the chain carries N6-acetyllysine; alternate. Lysine 171 carries the N6-succinyllysine; alternate modification. Lysine 171 is covalently cross-linked (Glycyl lysine isopeptide (Lys-Gly) (interchain with G-Cter in SUMO2); alternate). 3 positions are modified to N6-acetyllysine: lysine 180, lysine 201, and lysine 208. A Glycyl lysine isopeptide (Lys-Gly) (interchain with G-Cter in SUMO2); alternate cross-link involves residue lysine 201. Lysine 201 is covalently cross-linked (Glycyl lysine isopeptide (Lys-Gly) (interchain with G-Cter in SUMO); alternate). Lysine 208 is covalently cross-linked (Glycyl lysine isopeptide (Lys-Gly) (interchain with G-Cter in SUMO2)). The residue at position 212 (serine 212) is a Phosphoserine. Glycyl lysine isopeptide (Lys-Gly) (interchain with G-Cter in SUMO2) cross-links involve residues lysine 219 and lysine 233. Residues 219-242 (KRRHETRLVEIDNGKQREFESRLA) are linker 2. An N6-acetyllysine mark is found at lysine 233, lysine 260, lysine 265, and lysine 270. The segment at 243–383 (DALQELRAQH…HAYRKLLEGE (141 aa)) is coil 2. Residue lysine 260 forms a Glycyl lysine isopeptide (Lys-Gly) (interchain with G-Cter in SUMO2); alternate linkage. A Glycyl lysine isopeptide (Lys-Gly) (interchain with G-Cter in SUMO2); alternate cross-link involves residue lysine 270. Phosphoserine occurs at positions 277, 282, 301, and 307. Lysine 311 participates in a covalent cross-link: Glycyl lysine isopeptide (Lys-Gly) (interchain with G-Cter in SUMO2); alternate. An N6-acetyllysine mark is found at lysine 311, lysine 316, and lysine 341. Residues lysine 366 and lysine 378 each participate in a glycyl lysine isopeptide (Lys-Gly) (interchain with G-Cter in SUMO2) cross-link. Positions 384 to 442 (EERLRLSPSPTSQRSRGRASSHSSQSQGGGSVTKKRKLESSESRSSFSQHARTSGRVAV) are disordered. Positions 384-665 (EERLRLSPSP…SQSSQNCSIM (282 aa)) are tail. A phosphoserine mark is found at serine 390, serine 392, serine 395, serine 398, serine 403, serine 404, serine 406, serine 407, serine 409, and serine 414. Serine 392 is subject to Phosphoserine; by CDK1. The segment covering 395 to 409 (SQRSRGRASSHSSQS) has biased composition (low complexity). Residue threonine 416 is modified to Phosphothreonine. N6-acetyllysine occurs at positions 417 and 420. Glycyl lysine isopeptide (Lys-Gly) (interchain with G-Cter in SUMO2) cross-links involve residues lysine 417 and lysine 420. The Nuclear localization signal motif lies at 417-422 (KKRKLE). 4 positions are modified to phosphoserine: serine 423, serine 426, serine 429, and serine 431. Residues 428 to 545 (SSFSQHARTS…EEVAMRKLVR (118 aa)) form the LTD domain. Lysine 450 participates in a covalent cross-link: Glycyl lysine isopeptide (Lys-Gly) (interchain with G-Cter in SUMO2); alternate. 2 positions are modified to N6-acetyllysine: lysine 450 and lysine 457. Serine 458, glutamate 460, and serine 463 each carry phosphoserine. N6-acetyllysine is present on lysine 486. Residue lysine 486 forms a Glycyl lysine isopeptide (Lys-Gly) (interchain with G-Cter in SUMO2) linkage. Threonine 496 is modified (phosphothreonine). At serine 500 the chain carries Phosphoserine. Phosphothreonine occurs at positions 505 and 510. A phosphoserine mark is found at serine 533 and serine 546. At threonine 548 the chain carries Phosphothreonine. The tract at residues 553 to 577 (NEDDDEDGEELLHHHRGSHCSGSGD) is disordered. Phosphoserine occurs at positions 570, 572, and 573. A Glycyl lysine isopeptide (Lys-Gly) (interchain with G-Cter in SUMO2); alternate cross-link involves residue lysine 599. A Glycyl lysine isopeptide (Lys-Gly) (interchain with G-Cter in SUMO1); alternate cross-link involves residue lysine 599. Phosphoserine occurs at positions 613, 614, 617, and 620. O-linked (GlcNAc) serine glycosylation is found at serine 626 and serine 629. A phosphoserine mark is found at serine 629, serine 633, serine 637, and serine 653. The propeptide at 648-662 (LLGNSSPRSQSSQNC) is removed in Lamin-A/C form. The residue at position 662 (cysteine 662) is a Cysteine methyl ester. The S-farnesyl cysteine moiety is linked to residue cysteine 662. Residues 663 to 665 (SIM) constitute a propeptide, removed in Prelamin-A/C form and in Lamin-A/C form.

Belongs to the intermediate filament family. As to quaternary structure, homodimer of lamin A and lamin C. Lamin dimers then assemble into dimeric head-to-tail polymers. Ultimately, two head-to-tail polymers assemble laterally into a protofilament with a uniformly shaped rod of 3.5 nm in diameter. Interacts with lamin-associated polypeptides IA, IB and TMPO-alpha, RB1 and with emerin. Proteolytically processed isoform A interacts with NARF. Interacts with SREBF1, SREBF2, SUN1, SUN2 and TMEM43. Interacts with TMEM201. Prelamin-A/C interacts with EMD. Interacts with DMPK; may regulate nuclear envelope stability. Interacts with MLIP. Interacts with SUV39H1; the interaction increases stability of SUV39H1. Interacts with ITSN1 isoform 2. Interacts with IFFO1; the interaction forms an interior nucleoskeleton and the recruitment to DNA double-strand breaks. Interacts with EMD. In terms of assembly, interacts (via C-terminus) with LEMD2 (via N-terminus) (in vitro). In terms of processing, proteolytic cleavage of the C-terminal of 18 residues of prelamin-A/C results in the production of lamin-A/C. The prelamin-A/C maturation pathway includes farnesylation of CAAX motif by protein farnesyltransferase (FNTA and FNTB), removal of the last three amino acids (-AAX) by RCE1/FACE2 and/or ZMPSTE24, methylation of the C-terminal cysteine by ICMT and endoproteolytic removal of the last 15 C-terminal amino acids by ZMPSTE24. Proteolytic cleavage requires prior farnesylation and methylation, and absence of these blocks cleavage. Post-translationally, farnesylation of prelamin-A/C facilitates nuclear envelope targeting. Phosphorylation plays a key role in lamin organization, subcellular localization and nuclear envelope disintegration. Phosphorylation by CDK1 at Ser-22 and Ser-392 at the onset of mitosis drives lamin disassembly and nuclear envelope breakdown. Phosphorylation at Ser-22 and Ser-392 during interphase promotes localization to the nucleoplasm and regulates lamina assembly. Phosphorylation at Ser-22, Ser-392 and Ser-629 during interphase causes redistribution between the nucleus and the cytoplasm. Phosphorylation at Ser-22 by CDK1 regulates matrix stiffness. Phosphorylation status of Ser-22 determines its localization between double-strand break (DSB) sites and the nuclear matrix. Phosphorylated by ATR at Ser-282 in response to DNA damage, leading to lamin disassembly and nuclear envelope rupture. Phosphorylation also regulates stability in micronuclei arising from genome instability: phosphorylation at Ser-395 by ATR in response to genome instability and double-stranded DNA breaks primes LMNA for subsequent phosphorylation at Ser-392 by CDK1 and micronuclei envelope rupture. The rupture of micronuclear envelope triggers the cGAS-STING pathway thereby activating the type I interferon response and innate immunity. In terms of processing, isoform C is phosphorylated on Ser-392, Ser-407 and Ser-409 at interphase. Post-translationally, acetylation by KAT8 is required for nuclear architecture. Sumoylation is necessary for the localization to the nuclear envelope. In terms of processing, the N-terminus is blocked. Expressed in liver and in bone marrow (at protein level). Expressed in cardiomyocytes. In terms of tissue distribution, specifically expressed in germ cells.

The protein localises to the nucleus lamina. It is found in the nucleus envelope. It localises to the nucleus. The protein resides in the nucleoplasm. Its subcellular location is the nucleus matrix. In terms of biological role, lamins are intermediate filament proteins that assemble into a filamentous meshwork, and which constitute the major components of the nuclear lamina, a fibrous layer on the nucleoplasmic side of the inner nuclear membrane. Lamins provide a framework for the nuclear envelope, bridging the nuclear envelope and chromatin, thereby playing an important role in nuclear assembly, chromatin organization, nuclear membrane and telomere dynamics. Lamin A and C also regulate matrix stiffness by conferring nuclear mechanical properties. The structural integrity of the lamina is strictly controlled by the cell cycle, as seen by the disintegration and formation of the nuclear envelope in prophase and telophase, respectively. Lamin A and C are present in equal amounts in the lamina of mammals. Also invoved in DNA repair: recruited by DNA repair proteins XRCC4 and IFFO1 to the DNA double-strand breaks (DSBs) to prevent chromosome translocation by immobilizing broken DNA ends. Required for normal development of peripheral nervous system and skeletal muscle and for muscle satellite cell proliferation. Required for osteoblastogenesis and bone formation. Also prevents fat infiltration of muscle and bone marrow, helping to maintain the volume and strength of skeletal muscle and bone. Required for cardiac homeostasis. Prelamin-A/C can accelerate smooth muscle cell senescence. It acts to disrupt mitosis and induce DNA damage in vascular smooth muscle cells (VSMCs), leading to mitotic failure, genomic instability, and premature senescence. Its function is as follows. Isoform C2 may have a role in determining the organization of nuclear and chromosomal structures during spermatogenesis. This Mus musculus (Mouse) protein is Prelamin-A/C (Lmna).